The following is an 853-amino-acid chain: Auxin response factor 23 (853 aa).

Residues 121–141 form a disordered region; sequence KQQEDNGSTEEEVPSAPAAGH. Positions 149–251 form a DNA-binding region, TF-B3; sequence FCKTLTASDT…ELRVGVRRAM (103 aa). Disordered regions lie at residues 422–471 and 647–723; these read ESEP…NNTP and PAKS…QGVS. The segment covering 425–455 has biased composition (polar residues); sequence PNGTQRTFQTQENATPKSGFGNSSELESAQK. Over residues 672 to 686 the composition is skewed to basic and acidic residues; it reads EWRRPDVTEVEKCSD. The span at 706 to 723 shows a compositional bias: polar residues; the sequence is PSSQQASRNMSCKSQGVS. A PB1 domain is found at 725-809; the sequence is RSCKKVHKQG…HKIFIYTREE (85 aa). The tract at residues 815–853 is disordered; it reads PGTLNSRSEDSHANSMERGSVGREMRGCLSTSSLNSENC. Residues 843–853 are compositionally biased toward polar residues; that stretch reads LSTSSLNSENC.

This sequence belongs to the ARF family. As to quaternary structure, homodimers and heterodimers.

Its subcellular location is the nucleus. Auxin response factors (ARFs) are transcriptional factors that bind specifically to the DNA sequence 5'-TGTCTC-3' found in the auxin-responsive promoter elements (AuxREs). The sequence is that of Auxin response factor 23 (ARF23) from Oryza sativa subsp. indica (Rice).